A 181-amino-acid chain; its full sequence is UPF0177 protein YbdI (181 aa).

The next 5 membrane-spanning stretches (helical) occupy residues 10 to 30, 41 to 61, 81 to 101, 114 to 134, and 161 to 181; these read ILFL…GVFA, LLWL…AHYL, FVDS…IAPI, FFSH…LIHT, and SDSI…HIII.

It belongs to the UPF0177 family.

Its subcellular location is the cell membrane. The sequence is that of UPF0177 protein YbdI (ybdI) from Lactococcus lactis subsp. lactis (strain IL1403) (Streptococcus lactis).